Reading from the N-terminus, the 786-residue chain is E3 ubiquitin-protein ligase UHRF1 (786 aa).

Positions 1-78 (MWIQVRTMDG…IQLLVRQSLV (78 aa)) constitute a Ubiquitin-like domain. Phosphoserine is present on residues Ser76, Ser98, and Ser102. Residues 82-134 (PVPSSSGGSKERDSELSDTDSGCGLAQSESDKSSNSGEAANEPEGKADEDECD) are disordered. Tudor-like stretches follow at residues 139-213 (GLYK…ARAR) and 220-287 (DLQV…IERP). Residue Lys283 forms a Glycyl lysine isopeptide (Lys-Gly) (interchain with G-Cter in SUMO2) linkage. Positions 300-305 (RKSGPS) are linker. Ser302 carries the phosphoserine; by PKA modification. A PHD-type zinc finger spans residues 303-370 (GPSCKHCKDD…EWYCPDCRID (68 aa)). Histone H3R2me0 binding regions lie at residues 337–341 (CDECD) and 357–359 (PPE). Position 372 is a phosphoserine (Ser372). Lys389 participates in a covalent cross-link: Glycyl lysine isopeptide (Lys-Gly) (interchain with G-Cter in SUMO2). Lys403 is modified (N6-acetyllysine). The YDG domain maps to 423 to 586 (GPIPGIPVGT…FLVWRFLLRR (164 aa)). The segment at 449–450 (HV) is required to promote base flipping. DNA-binding positions include 467–468 (AG) and Asp473. 2 required for formation of a 5-methylcytosine-binding pocket regions span residues 470-473 (YEDD) and 482-485 (YTGS). Lys550 bears the N6-acetyllysine; alternate mark. Lys550 participates in a covalent cross-link: Glycyl lysine isopeptide (Lys-Gly) (interchain with G-Cter in SUMO2); alternate. The segment at 626–679 (NSKQAALDKEEEDGEEGFTSPRKGKRKSKSAGGDGSSRGTPKKTKVEPYSLTTQ) is disordered. Ser645 carries the post-translational modification Phosphoserine; by CDK1. Residues Ser655 and Ser662 each carry the phosphoserine modification. A Glycyl lysine isopeptide (Lys-Gly) (interchain with G-Cter in SUMO2) cross-link involves residue Lys670. Residues 717-756 (CICCQELVFRPITTVCQHNVCKDCLDRSFKAQVFSCPACR) form an RING-type zinc finger.

As to quaternary structure, interacts with DNMT3A and DNMT3B. Interacts with DNMT1; the interaction is direct. Interacts with USP7; leading to its deubiquitination. Interacts with histone H3. Interacts with HDAC1, but not with HDAC2. Interacts with BLTP3A. Interacts with PML. Interacts with EHMT2. Binds methylated CpG containing oligonucleotides. Interacts with ZNF263; recruited to the SIX3 promoter along with other proteins involved in chromatin modification and transcriptional corepression where it contributes to transcriptional repression. Interacts with UHRF2. Interacts with FANCD2. Interacts with TET1 isoform 2; this interaction induces the recruitment of TET1 isoform 2 to replicating heterochromatin. Post-translationally, phosphorylation at Ser-302 of the linker region decreases the binding to H3K9me3. Phosphorylation at Ser-645 by CDK1 during M phase impairs interaction with USP7, preventing deubiquitination and leading to degradation by the proteasome. In terms of processing, ubiquitinated; which leads to proteasomal degradation. Autoubiquitinated; interaction with USP7 leads to deubiquitination and prevents degradation. Ubiquitination and degradation takes place during M phase, when phosphorylation at Ser-645 prevents interaction with USP7 and subsequent deubiquitination. Polyubiquitination may be stimulated by DNA damage.

It is found in the nucleus. The enzyme catalyses S-ubiquitinyl-[E2 ubiquitin-conjugating enzyme]-L-cysteine + [acceptor protein]-L-lysine = [E2 ubiquitin-conjugating enzyme]-L-cysteine + N(6)-ubiquitinyl-[acceptor protein]-L-lysine.. It functions in the pathway protein modification; protein ubiquitination. Functionally, multidomain protein that acts as a key epigenetic regulator by bridging DNA methylation and chromatin modification. Specifically recognizes and binds hemimethylated DNA at replication forks via its YDG domain and recruits DNMT1 methyltransferase to ensure faithful propagation of the DNA methylation patterns through DNA replication. In addition to its role in maintenance of DNA methylation, also plays a key role in chromatin modification: through its tudor-like regions and PHD-type zinc fingers, specifically recognizes and binds histone H3 trimethylated at 'Lys-9' (H3K9me3) and unmethylated at 'Arg-2' (H3R2me0), respectively, and recruits chromatin proteins. Enriched in pericentric heterochromatin where it recruits different chromatin modifiers required for this chromatin replication. Also localizes to euchromatic regions where it negatively regulates transcription possibly by impacting DNA methylation and histone modifications. Has E3 ubiquitin-protein ligase activity by mediating the ubiquitination of target proteins such as histone H3 and PML. It is still unclear how E3 ubiquitin-protein ligase activity is related to its role in chromatin in vivo. Plays a role in DNA repair by cooperating with UHRF2 to ensure recruitment of FANCD2 to interstrand cross-links (ICLs) leading to FANCD2 activation. Plays a pivotal role in the establishment of correct spindle architecture by catalyzing the 'Lys-63'-linked ubiquitination of KIF11, thereby controlling KIF11 localization on the spindle. The polypeptide is E3 ubiquitin-protein ligase UHRF1 (UHRF1) (Bos taurus (Bovine)).